A 353-amino-acid polypeptide reads, in one-letter code: Photosystem II D2 protein (353 aa).

Thr2 carries the N-acetylthreonine modification. Position 2 is a phosphothreonine (Thr2). The helical transmembrane segment at 41–61 (CAYFALGGWFTGTTFVTSWYT) threads the bilayer. His118 provides a ligand contact to chlorophyll a. Residues 125-141 (GFMLRQFELARSVQLRP) traverse the membrane as a helical segment. 2 residues coordinate pheophytin a: Gln130 and Asn143. A helical membrane pass occupies residues 153–166 (VFVSVFLIYPLGQS). His198 serves as a coordination point for chlorophyll a. The helical transmembrane segment at 208–228 (AALLCAIHGATVENTLFEDGD) threads the bilayer. A plastoquinone contacts are provided by His215 and Phe262. Residue His215 coordinates Fe cation. Residue His269 participates in Fe cation binding. A helical membrane pass occupies residues 279–295 (GLWMSALGVVGLALNLR).

Belongs to the reaction center PufL/M/PsbA/D family. PSII is composed of 1 copy each of membrane proteins PsbA, PsbB, PsbC, PsbD, PsbE, PsbF, PsbH, PsbI, PsbJ, PsbK, PsbL, PsbM, PsbT, PsbX, PsbY, PsbZ, Psb30/Ycf12, at least 3 peripheral proteins of the oxygen-evolving complex and a large number of cofactors. It forms dimeric complexes. The D1/D2 heterodimer binds P680, chlorophylls that are the primary electron donor of PSII, and subsequent electron acceptors. It shares a non-heme iron and each subunit binds pheophytin, quinone, additional chlorophylls, carotenoids and lipids. There is also a Cl(-1) ion associated with D1 and D2, which is required for oxygen evolution. The PSII complex binds additional chlorophylls, carotenoids and specific lipids. serves as cofactor.

The protein resides in the plastid. It is found in the chloroplast thylakoid membrane. It catalyses the reaction 2 a plastoquinone + 4 hnu + 2 H2O = 2 a plastoquinol + O2. Its function is as follows. Photosystem II (PSII) is a light-driven water:plastoquinone oxidoreductase that uses light energy to abstract electrons from H(2)O, generating O(2) and a proton gradient subsequently used for ATP formation. It consists of a core antenna complex that captures photons, and an electron transfer chain that converts photonic excitation into a charge separation. The D1/D2 (PsbA/PsbD) reaction center heterodimer binds P680, the primary electron donor of PSII as well as several subsequent electron acceptors. D2 is needed for assembly of a stable PSII complex. This chain is Photosystem II D2 protein, found in Citrus sinensis (Sweet orange).